The chain runs to 525 residues: GMP synthase [glutamine-hydrolyzing] (525 aa).

The region spanning 8–207 is the Glutamine amidotransferase type-1 domain; that stretch reads KILILDFGSQ…ALDICGCAAN (200 aa). Cysteine 85 functions as the Nucleophile in the catalytic mechanism. Catalysis depends on residues histidine 181 and glutamate 183. The region spanning 208 to 400 is the GMPS ATP-PPase domain; that stretch reads WKPSSIIEDA…LGLPYNMLYR (193 aa). Residue 235–241 coordinates ATP; the sequence is SGGVDSS.

As to quaternary structure, homodimer.

The catalysed reaction is XMP + L-glutamine + ATP + H2O = GMP + L-glutamate + AMP + diphosphate + 2 H(+). Its pathway is purine metabolism; GMP biosynthesis; GMP from XMP (L-Gln route): step 1/1. Functionally, catalyzes the synthesis of GMP from XMP. This chain is GMP synthase [glutamine-hydrolyzing], found in Shewanella baltica (strain OS223).